Here is a 66-residue protein sequence, read N- to C-terminus: Opicalcin-2 (66 aa).

The N-terminal stretch at 1 to 22 (MKPSLIIVTFIVVFMTISCVAA) is a signal peptide. Residues 23–31 (DDEQETWIE) constitute a propeptide that is removed on maturation. 3 disulfides stabilise this stretch: Cys-36–Cys-50, Cys-43–Cys-54, and Cys-49–Cys-65. The segment at 55-57 (KRR) is essential for stimulation of [3H]ryanodine binding to RYR1.

Belongs to the scorpion calcin family. In terms of tissue distribution, expressed by the venom gland.

It localises to the secreted. Its function is as follows. This toxin stabilizes ryanodine receptor 1 (RyR1) opening in a long-lasting subconductance state (40% of the full conductance state). Furthermore, it triggers calcium release from sarcoplasmic vesicles (64.2 nM are enough to induce a sharp release, and 50% of the total calcium is released after toxin (100 nM) addition) probably by acting as a cell-penetrating peptide (CPP). In addition, it has been shown to dose-dependently stimulate ryanodine binding to RyR1 (EC(50)=3.2 nM). It also augments the bell-shaped calcium-[3H]ryanodine binding curve that is maximal at about 10 uM calcium concentration. It binds a different site as ryanodine. It acts synergistically with caffeine. In vivo, intracerebroventricular injection into mice induces neurotoxic symptoms, followed by death. This is Opicalcin-2 from Opistophthalmus carinatus (African yellow leg scorpion).